Reading from the N-terminus, the 504-residue chain is Maturase K (504 aa).

It belongs to the intron maturase 2 family. MatK subfamily.

Its subcellular location is the plastid. It localises to the chloroplast. Its function is as follows. Usually encoded in the trnK tRNA gene intron. Probably assists in splicing its own and other chloroplast group II introns. This is Maturase K from Hamamelis mollis (Chinese witch hazel).